We begin with the raw amino-acid sequence, 860 residues long: MQEQYRPDLIEADVQKYWAEKKTFKAVKDPFKEKYYCLSMFPYPSGRLHMGHVRNYTIGDVISRYQRMNGKNVLQPMGWDAFGLPAEGAAIKNKTAPAKWTYENIEYMKNQLKVLGFGFDWDREITTCKPEYYKWEQWFFTELYKKGLVYKKTSTVNWCPNDETVLANEQVHEGGCWRCDTPVEQKEIPQWFIKITDYAEQLLSDLDQLPEWPDMVKTMQRNWIGRSEGVEITFNVAHSDQTLTVYTTRPDTFYGVSYLAVAAAHPLAENAAKNNPELAAFIHEAKNTKVAEAELATMEKKGMATGLYAVHPMTGKQLPIWVANFVLMHYGTGAVMAVPAHDQRDYEFAQKYQLPLFPVIKPADNSAWDFSKQAYTEHGITINSAEFDGLDFEATFNGIADKLEKIGVGKRQVNYRLRDWGVSRQRYWGAPIPMLTLENGDVVVAPLQDLPIVLPEDVVMDGVKSPIKADPEWAKTTYNGQVALKETDTFDTFMESSWYYARYTSPQYQQAMLDADETNYWLPVDQYIGGIEHATMHLLYFRFFHKLLRDAGFVTSDEPSKKLLCQGMVLADAFYYTSPTNERIWVSPTKVTLERDEKGRIIKAVDDEGHELVHSGMTKMSKSKNNGIDPQEMVEKYGADTVRLFMMFASPAEMTLEWQESGVEGANRFLRRLWNLVFEYNQNPAQTALDPTALSVEQKALRREVHKTIAKVSDDIGRRQTFNTAIAAIMELMNKLTKASLSNEQDRAVMAEALNAVVRMLYPITPHICFQLWQDLGNESAIDFAPWVIADAEAMVEDEKLVVIQVNGKVRAKVTVPADMSEDEIKQVALAEENVQKFLNGLTVVKTIYVPGKLFSFVAK.

Residues 42-52 (PYPSGRLHMGH) carry the 'HIGH' region motif. A 'KMSKS' region motif is present at residues 619–623 (KMSKS). Lysine 622 is an ATP binding site.

This sequence belongs to the class-I aminoacyl-tRNA synthetase family.

The protein localises to the cytoplasm. It catalyses the reaction tRNA(Leu) + L-leucine + ATP = L-leucyl-tRNA(Leu) + AMP + diphosphate. The sequence is that of Leucine--tRNA ligase from Histophilus somni (strain 2336) (Haemophilus somnus).